We begin with the raw amino-acid sequence, 81 residues long: UPF0349 protein SE_0633 (81 aa).

It belongs to the UPF0349 family.

This chain is UPF0349 protein SE_0633, found in Staphylococcus epidermidis (strain ATCC 12228 / FDA PCI 1200).